The chain runs to 424 residues: UDP-N-acetylglucosamine 1-carboxyvinyltransferase (424 aa).

22-23 (KN) serves as a coordination point for phosphoenolpyruvate. R96 is a UDP-N-acetyl-alpha-D-glucosamine binding site. Catalysis depends on C120, which acts as the Proton donor. Residue C120 is modified to 2-(S-cysteinyl)pyruvic acid O-phosphothioketal. UDP-N-acetyl-alpha-D-glucosamine contacts are provided by residues 125–129 (RPVDQ), D312, and I334.

Belongs to the EPSP synthase family. MurA subfamily.

The protein localises to the cytoplasm. It catalyses the reaction phosphoenolpyruvate + UDP-N-acetyl-alpha-D-glucosamine = UDP-N-acetyl-3-O-(1-carboxyvinyl)-alpha-D-glucosamine + phosphate. It participates in cell wall biogenesis; peptidoglycan biosynthesis. Cell wall formation. Adds enolpyruvyl to UDP-N-acetylglucosamine. In Polynucleobacter asymbioticus (strain DSM 18221 / CIP 109841 / QLW-P1DMWA-1) (Polynucleobacter necessarius subsp. asymbioticus), this protein is UDP-N-acetylglucosamine 1-carboxyvinyltransferase.